A 589-amino-acid polypeptide reads, in one-letter code: Guanylate-binding protein 2 (589 aa).

Residues methionine 1–cysteine 309 form a GTPase domain (Globular) region. The 242-residue stretch at asparagine 35–alanine 276 folds into the GB1/RHD3-type G domain. GTP contacts are provided by residues glycine 45–serine 52, arginine 181–aspartate 182, and leucine 245. Residue cysteine 586 is modified to Cysteine methyl ester. The S-geranylgeranyl cysteine moiety is linked to residue cysteine 586. Residues threonine 587 to leucine 589 constitute a propeptide, removed in mature form.

Belongs to the TRAFAC class dynamin-like GTPase superfamily. GB1/RHD3 GTPase family. GB1 subfamily. Homodimer; homodimerization occurs upon GTP-binding and is required for the association with membranous structures. Heterodimer with other family members, including GBP1, GBP3, GBP4 and GBP5. In terms of processing, isoprenylation is required for proper subcellular location. In terms of tissue distribution, widely expressed.

The protein localises to the cytoplasmic vesicle membrane. It localises to the golgi apparatus membrane. It is found in the cytoplasm. Its subcellular location is the perinuclear region. It catalyses the reaction GTP + H2O = GDP + phosphate + H(+). Interferon (IFN)-inducible GTPase that plays important roles in innate immunity against a diverse range of bacterial, viral and protozoan pathogens. Hydrolyzes GTP to GMP in 2 consecutive cleavage reactions, but the major reaction product is GDP. Following infection, recruited to the pathogen-containing vacuoles or vacuole-escaped bacteria and acts as a positive regulator of inflammasome assembly by promoting the release of inflammasome ligands from bacteria. Acts by promoting lysis of pathogen-containing vacuoles, releasing pathogens into the cytosol. Following pathogen release in the cytosol, promotes recruitment of proteins that mediate bacterial cytolysis: this liberates ligands that are detected by inflammasomes, such as lipopolysaccharide (LPS) that activates the non-canonical CASP4/CASP11 inflammasome or double-stranded DNA (dsDNA) that activates the AIM2 inflammasome. Confers protection to the protozoan pathogen Toxoplasma gondii. Independently of its GTPase activity, acts as an inhibitor of various viruses infectivity by inhibiting FURIN-mediated maturation of viral envelope proteins. This chain is Guanylate-binding protein 2 (Gbp2), found in Rattus norvegicus (Rat).